Reading from the N-terminus, the 353-residue chain is UDP-N-acetylglucosamine--N-acetylmuramyl-(pentapeptide) pyrophosphoryl-undecaprenol N-acetylglucosamine transferase (353 aa).

Residues threonine 10 to glycine 12, asparagine 124, serine 183, and glutamine 283 each bind UDP-N-acetyl-alpha-D-glucosamine.

It belongs to the glycosyltransferase 28 family. MurG subfamily.

The protein localises to the cell inner membrane. The catalysed reaction is di-trans,octa-cis-undecaprenyl diphospho-N-acetyl-alpha-D-muramoyl-L-alanyl-D-glutamyl-meso-2,6-diaminopimeloyl-D-alanyl-D-alanine + UDP-N-acetyl-alpha-D-glucosamine = di-trans,octa-cis-undecaprenyl diphospho-[N-acetyl-alpha-D-glucosaminyl-(1-&gt;4)]-N-acetyl-alpha-D-muramoyl-L-alanyl-D-glutamyl-meso-2,6-diaminopimeloyl-D-alanyl-D-alanine + UDP + H(+). The protein operates within cell wall biogenesis; peptidoglycan biosynthesis. Its function is as follows. Cell wall formation. Catalyzes the transfer of a GlcNAc subunit on undecaprenyl-pyrophosphoryl-MurNAc-pentapeptide (lipid intermediate I) to form undecaprenyl-pyrophosphoryl-MurNAc-(pentapeptide)GlcNAc (lipid intermediate II). This is UDP-N-acetylglucosamine--N-acetylmuramyl-(pentapeptide) pyrophosphoryl-undecaprenol N-acetylglucosamine transferase from Helicobacter pylori (strain G27).